Here is a 101-residue protein sequence, read N- to C-terminus: MNLENVILSPVVTEKSQDLQTIGERMGKRTVKYTFKVHPDANKTLIKQALKQMYNVVPTNVNVAVYRGKMKRFRNMPSQRPHYKKAVVTFADGANLDFAKV.

It belongs to the universal ribosomal protein uL23 family. In terms of assembly, part of the 50S ribosomal subunit. Contacts protein L29, and trigger factor when it is bound to the ribosome.

Its function is as follows. One of the early assembly proteins it binds 23S rRNA. One of the proteins that surrounds the polypeptide exit tunnel on the outside of the ribosome. Forms the main docking site for trigger factor binding to the ribosome. In Leptospira biflexa serovar Patoc (strain Patoc 1 / Ames), this protein is Large ribosomal subunit protein uL23.